The primary structure comprises 160 residues: Nascent polypeptide-associated complex subunit alpha (160 aa).

One can recognise an NAC-A/B domain in the interval threonine 10–leucine 75. The UBA domain occupies valine 120–threonine 159.

The protein belongs to the NAC-alpha family. In terms of assembly, part of the nascent polypeptide-associated complex (NAC), consisting of nacA and nacB.

Its subcellular location is the cytoplasm. It localises to the nucleus. Component of the nascent polypeptide-associated complex (NAC), a dynamic component of the ribosomal exit tunnel, protecting the emerging polypeptides from interaction with other cytoplasmic proteins to ensure appropriate nascent protein targeting. The NAC complex also promotes mitochondrial protein import by enhancing productive ribosome interactions with the outer mitochondrial membrane and blocks the inappropriate interaction of ribosomes translating non-secretory nascent polypeptides with translocation sites in the membrane of the endoplasmic reticulum. May also be involved in transcription regulation. This is Nascent polypeptide-associated complex subunit alpha (nacA) from Dictyostelium discoideum (Social amoeba).